The chain runs to 120 residues: Ribosome-binding factor A (120 aa).

The protein belongs to the RbfA family. As to quaternary structure, monomer. Binds 30S ribosomal subunits, but not 50S ribosomal subunits or 70S ribosomes.

It localises to the cytoplasm. In terms of biological role, one of several proteins that assist in the late maturation steps of the functional core of the 30S ribosomal subunit. Associates with free 30S ribosomal subunits (but not with 30S subunits that are part of 70S ribosomes or polysomes). Required for efficient processing of 16S rRNA. May interact with the 5'-terminal helix region of 16S rRNA. The protein is Ribosome-binding factor A of Dictyoglomus thermophilum (strain ATCC 35947 / DSM 3960 / H-6-12).